The chain runs to 348 residues: Probable mitochondrial adenine nucleotide transporter BTL1 (348 aa).

3 Solcar repeats span residues 46–129 (SREA…VKRA), 157–241 (SWIS…MKTS), and 251–338 (LSRP…WKDI). 6 helical membrane-spanning segments follow: residues 52-72 (FLSG…LETI), 104-124 (GNEI…GTFE), 156-176 (ISWI…STLV), 213-233 (FYAG…CYYF), 256-276 (MLVL…PLEV), and 321-341 (VMPS…ILLA).

This sequence belongs to the mitochondrial carrier (TC 2.A.29) family.

It localises to the mitochondrion inner membrane. Its function is as follows. Probable mitochondrial adenylate carrier that catalyzes the transport of ATP, ADP and AMP. The protein is Probable mitochondrial adenine nucleotide transporter BTL1 of Arabidopsis thaliana (Mouse-ear cress).